The chain runs to 296 residues: Bifunctional protein FolD 1 (296 aa).

NADP(+)-binding positions include 167 to 169 (GCG) and isoleucine 235.

It belongs to the tetrahydrofolate dehydrogenase/cyclohydrolase family. Homodimer.

The enzyme catalyses (6R)-5,10-methylene-5,6,7,8-tetrahydrofolate + NADP(+) = (6R)-5,10-methenyltetrahydrofolate + NADPH. It catalyses the reaction (6R)-5,10-methenyltetrahydrofolate + H2O = (6R)-10-formyltetrahydrofolate + H(+). Its pathway is one-carbon metabolism; tetrahydrofolate interconversion. In terms of biological role, catalyzes the oxidation of 5,10-methylenetetrahydrofolate to 5,10-methenyltetrahydrofolate and then the hydrolysis of 5,10-methenyltetrahydrofolate to 10-formyltetrahydrofolate. This is Bifunctional protein FolD 1 from Nocardioides sp. (strain ATCC BAA-499 / JS614).